Reading from the N-terminus, the 339-residue chain is Endo-beta-N-acetylglucosaminidase F1 (339 aa).

The or 51, or 52 signal peptide spans 1 to 50; the sequence is MKKFINQFSASLKNNILVFLAFPFVWTSCARDNPLSSENSNISPNAAARA. Positions 60–326 constitute a GH18 domain; it reads IKLFSFTEVN…KLIAKELYGD (267 aa). Residue Glu182 is the Proton donor of the active site. Residue Trp339 is a propeptide, removed in mature form.

The protein belongs to the glycosyl hydrolase 18 family. As to quaternary structure, monomer.

It localises to the secreted. It carries out the reaction an N(4)-(oligosaccharide-(1-&gt;3)-[oligosaccharide-(1-&gt;6)]-beta-D-Man-(1-&gt;4)-beta-D-GlcNAc-(1-&gt;4)-alpha-D-GlcNAc)-L-asparaginyl-[protein] + H2O = an oligosaccharide-(1-&gt;3)-[oligosaccharide-(1-&gt;6)]-beta-D-Man-(1-&gt;4)-D-GlcNAc + N(4)-(N-acetyl-beta-D-glucosaminyl)-L-asparaginyl-[protein]. Endohydrolysis of the di-N-acetylchitobiosyl unit in high-mannose glycopeptides and glycoproteins. Does not hydrolyze complex bi- or triantennary glycans. The presence of a core-bound fucose impedes endo F1 hydrolysis. The polypeptide is Endo-beta-N-acetylglucosaminidase F1 (endOF1) (Elizabethkingia meningoseptica (Chryseobacterium meningosepticum)).